The chain runs to 152 residues: Ribonuclease H (152 aa).

The 142-residue stretch at 1–142 (MNSKVVIYTD…ADKLAVQGRE (142 aa)) folds into the RNase H type-1 domain. Residues Asp-10, Glu-48, Asp-70, and Asp-134 each coordinate Mg(2+).

It belongs to the RNase H family. In terms of assembly, monomer. The cofactor is Mg(2+).

The protein localises to the cytoplasm. The catalysed reaction is Endonucleolytic cleavage to 5'-phosphomonoester.. Its function is as follows. Endonuclease that specifically degrades the RNA of RNA-DNA hybrids. The sequence is that of Ribonuclease H from Rickettsia akari (strain Hartford).